Reading from the N-terminus, the 183-residue chain is Protein Syd (183 aa).

The protein belongs to the Syd family.

It localises to the cell inner membrane. In terms of biological role, interacts with the SecY protein in vivo. May bind preferentially to an uncomplexed state of SecY, thus functioning either as a chelating agent for excess SecY in the cell or as a regulatory factor that negatively controls the translocase function. The polypeptide is Protein Syd (Idiomarina loihiensis (strain ATCC BAA-735 / DSM 15497 / L2-TR)).